A 478-amino-acid polypeptide reads, in one-letter code: NADH-quinone oxidoreductase subunit N (478 aa).

Transmembrane regions (helical) follow at residues 7 to 27, 46 to 66, 74 to 94, 109 to 129, 163 to 183, 204 to 224, 237 to 257, 273 to 293, 300 to 320, 328 to 348, 371 to 391, 405 to 425, and 451 to 471; these read SFIP…LLIA, ILLV…VLTF, AFGD…FLFS, FTLG…YNLI, FVLG…IYGA, VVLS…LGAV, APTA…FAML, QSLI…ITLV, LLAY…IAAN, MFYT…IVAL, LALM…FVGF, GFTW…FYYL, and WAVS…SSLI.

The protein belongs to the complex I subunit 2 family. In terms of assembly, NDH-1 is composed of 14 different subunits. Subunits NuoA, H, J, K, L, M, N constitute the membrane sector of the complex.

Its subcellular location is the cell inner membrane. The enzyme catalyses a quinone + NADH + 5 H(+)(in) = a quinol + NAD(+) + 4 H(+)(out). NDH-1 shuttles electrons from NADH, via FMN and iron-sulfur (Fe-S) centers, to quinones in the respiratory chain. The immediate electron acceptor for the enzyme in this species is believed to be ubiquinone. Couples the redox reaction to proton translocation (for every two electrons transferred, four hydrogen ions are translocated across the cytoplasmic membrane), and thus conserves the redox energy in a proton gradient. The sequence is that of NADH-quinone oxidoreductase subunit N from Hydrogenovibrio crunogenus (strain DSM 25203 / XCL-2) (Thiomicrospira crunogena).